The sequence spans 337 residues: Alanine racemase (337 aa).

Lys33 serves as the catalytic Proton acceptor; specific for D-alanine. N6-(pyridoxal phosphate)lysine is present on Lys33. Arg118 is a binding site for substrate. Catalysis depends on Tyr246, which acts as the Proton acceptor; specific for L-alanine. Residue Met292 participates in substrate binding.

This sequence belongs to the alanine racemase family. Pyridoxal 5'-phosphate serves as cofactor.

The enzyme catalyses L-alanine = D-alanine. It participates in amino-acid biosynthesis; D-alanine biosynthesis; D-alanine from L-alanine: step 1/1. Functionally, catalyzes the interconversion of L-alanine and D-alanine. May also act on other amino acids. This chain is Alanine racemase (alr), found in Campylobacter curvus (strain 525.92).